The chain runs to 335 residues: MMEGHMLFFLLVVVVQFLTGVLANGLIVVVNAIDLIMWKKMAPLDLLLFCLATSRIILQLCILFAQLGLSCLVRHTLFADNVTFVYIINELSLWFATWLGVFYCAKIATIPHPLFLWLKMRISRLVPWLILASVVYVTVTTFIHSRETSELPKQIFISFFSKNTTRVRPAHATLLSVFVFGLTLPFLIFTVAVLLLLSSLWNHSRQMRTMVGTREPSRHALVSAMLSILSFLILYLSHDMVAVLICTQGLHFGSRTFAFCLLVIGMYPSLHSIVLILGNPKLKRNAKTFIVHCKCCHCARAWVTSRNPRLSDLPVPATHHSANKTSCSEACIMPS.

The Extracellular portion of the chain corresponds to 1 to 7 (MMEGHML). Residues 8-28 (FFLLVVVVQFLTGVLANGLIV) traverse the membrane as a helical segment. Topologically, residues 29–43 (VVNAIDLIMWKKMAP) are cytoplasmic. A helical membrane pass occupies residues 44 to 64 (LDLLLFCLATSRIILQLCILF). At 65 to 81 (AQLGLSCLVRHTLFADN) the chain is on the extracellular side. A glycan (N-linked (GlcNAc...) asparagine) is linked at Asn-81. A helical transmembrane segment spans residues 82–102 (VTFVYIINELSLWFATWLGVF). Topologically, residues 103–124 (YCAKIATIPHPLFLWLKMRISR) are cytoplasmic. Residues 125–145 (LVPWLILASVVYVTVTTFIHS) traverse the membrane as a helical segment. Over 146 to 176 (RETSELPKQIFISFFSKNTTRVRPAHATLLS) the chain is Extracellular. N-linked (GlcNAc...) asparagine glycosylation occurs at Asn-163. The helical transmembrane segment at 177–197 (VFVFGLTLPFLIFTVAVLLLL) threads the bilayer. Over 198–224 (SSLWNHSRQMRTMVGTREPSRHALVSA) the chain is Cytoplasmic. A helical membrane pass occupies residues 225–245 (MLSILSFLILYLSHDMVAVLI). Residues 246-256 (CTQGLHFGSRT) lie on the Extracellular side of the membrane. Residues 257–277 (FAFCLLVIGMYPSLHSIVLIL) traverse the membrane as a helical segment. The Cytoplasmic segment spans residues 278–335 (GNPKLKRNAKTFIVHCKCCHCARAWVTSRNPRLSDLPVPATHHSANKTSCSEACIMPS).

This sequence belongs to the G-protein coupled receptor T2R family. As to expression, expressed in subsets of taste receptor cells of the tongue and palate epithelium and exclusively in gustducin-positive cells. Expressed in 15% taste bud cells in circumvallate and foliate papillae but only in 2% in fungiform papillae. Expressed in the gastro and duodenal tissue. Not expressed in colon, liver, heart and kidney.

Its subcellular location is the membrane. In terms of biological role, gustducin-coupled receptor implicated in the perception of bitter compounds in the oral cavity and the gastrointestinal tract. Signals through PLCB2 and the calcium-regulated cation channel TRPM5. This is Taste receptor type 2 member 119 (Tas2r119) from Mus musculus (Mouse).